Reading from the N-terminus, the 230-residue chain is Preflagellin peptidase (230 aa).

Met-1 is a topological domain (cytoplasmic). A helical transmembrane segment spans residues 2–18 (IEYIIGALGLIIASVQD). Residues 19-23 (FRSRE) lie on the Extracellular side of the membrane. The chain crosses the membrane as a helical span at residues 24–46 (IEDYIWIFLAVFGVLFAIYSSIT). Over 47–49 (LLD) the chain is Cytoplasmic. A helical membrane pass occupies residues 50–72 (YSILINSISGFVICFILGYMMFL). Topologically, residues 73-78 (SGIGGG) are extracellular. The helical transmembrane segment at 79–89 (DGKMLIGLGAL) threads the bilayer. Over 90–110 (VPKFQMPIYTSLGTLLNLNYV) the chain is Cytoplasmic. A helical membrane pass occupies residues 111 to 139 (PTFPIMVFINGIFFMVFLPFVILFRNILN). Over 140–204 (GARPKTGKEF…EEIWVTPQIP (65 aa)) the chain is Extracellular. A helical transmembrane segment spans residues 205 to 216 (LIIPITLSYLVT). The Cytoplasmic segment spans residues 217 to 230 (PIIGDRILDFLIPF).

The protein belongs to the peptidase A24 family. Archaeal preflagellin peptidase subfamily.

It localises to the cell membrane. The catalysed reaction is Cleaves the signal peptide of 3 to 12 amino acids from the N-terminal of preflagellin, usually at Arg-Gly-|- or Lys-Gly-|-, to release flagellin.. Cleaves the N-terminal leader peptide from preflagellins. This Methanococcus maripaludis (strain C6 / ATCC BAA-1332) protein is Preflagellin peptidase (flaK).